The chain runs to 64 residues: Large ribosomal subunit protein bL35 (64 aa).

This sequence belongs to the bacterial ribosomal protein bL35 family.

The protein is Large ribosomal subunit protein bL35 of Carboxydothermus hydrogenoformans (strain ATCC BAA-161 / DSM 6008 / Z-2901).